A 233-amino-acid polypeptide reads, in one-letter code: Lipid A 4'-phosphatase (233 aa).

A topological domain (cytoplasmic) is located at residue Met1. The chain crosses the membrane as a helical span at residues 2 to 22 (LLFWMWWALLAVFRAFPGIDI). The Extracellular portion of the chain corresponds to 23–60 (YFSQLFFVGADCDATAAAGNICGGFPYRDVAAFDLLRT). Residues 61–81 (VFFRLPYVVAIVMVWKLVECY) form a helical membrane-spanning segment. The Cytoplasmic segment spans residues 82 to 94 (QQHGATFNAERAQ). Residues 95–115 (KLKVALGTLLIGPVLLVNVVL) form a helical membrane-spanning segment. The Extracellular portion of the chain corresponds to 116–149 (KEHWGRPRPIQTDIFGGALHFAEAGSLAGKCVSN). Residues 150 to 170 (CSFVSGEAASAGWLFCLLLFV) traverse the membrane as a helical segment. Residues 171–176 (PKSLRY) are Cytoplasmic-facing. A helical membrane pass occupies residues 177-197 (AVAAPLAAISILTPAMRLSFG). Topologically, residues 198–200 (AHY) are extracellular. Residues 201–221 (LSDVVLGWLSSLVVFAALLAL) form a helical membrane-spanning segment. At 222-233 (TESQQHQKNSEI) the chain is on the cytoplasmic side.

This sequence belongs to the lipid A LpxF 4'-phosphatase family.

It is found in the cell inner membrane. The protein operates within bacterial outer membrane biogenesis; LPS lipid A biosynthesis. Its function is as follows. Removes the 4'-phosphate moiety from lipid IV(A) (a tetraacylated precursor of lipid A). The sequence is that of Lipid A 4'-phosphatase from Rhizobium leguminosarum.